Here is an 84-residue protein sequence, read N- to C-terminus: Control protein C.SmaI (84 aa).

The region spanning 19-73 (VRSYRNINNLSQEQLAEISGLHRTYIGSVERKERNVTLSTLIILAKALNTSVPKL) is the HTH cro/C1-type domain. A DNA-binding region (H-T-H motif) is located at residues 30 to 49 (QEQLAEISGLHRTYIGSVER).

Its function is as follows. May control expression of its associated restriction-modification system SmaI. The chain is Control protein C.SmaI from Serratia marcescens.